Reading from the N-terminus, the 87-residue chain is Large ribosomal subunit protein bL31B (87 aa).

This sequence belongs to the bacterial ribosomal protein bL31 family. Type B subfamily. Part of the 50S ribosomal subunit.

The protein is Large ribosomal subunit protein bL31B of Burkholderia multivorans (strain ATCC 17616 / 249).